The primary structure comprises 259 residues: MSAEEQDTRSGGIQVIARAAELLRVLQAHPGGLSQAEIGERVGMARSTVSRILNALEDEGLVASRGARGPYRLGPEITRMATTVRLGVVTEMHPFLTELSRELDETVDLSILDGDRADVVDQVVPPQRLRAVSAVGESFPLYCCANGKALLAALPPERQARALPSRLAPLTANTITDRAALRDELNRIRVDGVAYDREEQTEGICAVGAVLRGVSVELVAVSVPVPAQRFYGREAELAGALLAWVSKVDAWFNGTEDRK.

One can recognise an HTH iclR-type domain in the interval 13-75 (IQVIARAAEL…GARGPYRLGP (63 aa)). Positions 35-54 (QAEIGERVGMARSTVSRILN) form a DNA-binding region, H-T-H motif. The 172-residue stretch at 88–259 (VVTEMHPFLT…AWFNGTEDRK (172 aa)) folds into the IclR-ED domain.

Homodimer.

Its function is as follows. Binds to the upstream region of Rv1714 and probably modulates the expression of the downstream gene(s). This Mycobacterium tuberculosis (strain ATCC 25618 / H37Rv) protein is HTH-type transcriptional regulator Rv1719.